The chain runs to 4561 residues: StAR-related lipid transfer protein 9 (4561 aa).

The Kinesin motor domain maps to 3–384; sequence NVQVAVRVRP…MRYASNAKNI (382 aa). 103 to 110 contributes to the ATP binding site; sequence GQTGSGKT. Over residues 307 to 321 the composition is skewed to low complexity; it reads SSGGDSGVPSTTSGA. The disordered stretch occupies residues 307–330; sequence SSGGDSGVPSTTSGASSGGGPARR. Residues 482-533 enclose the FHA domain; the sequence is TKIGRIDSDQEQDIVLQGQWIERDHCTITSTCGVVILRPTQGARCTVNGREV. Disordered stretches follow at residues 784-805, 873-1064, and 1092-1153; these read SRAP…RRSR, SRWR…DTES, and WNLP…PSDS. Composition is skewed to polar residues over residues 789 to 805, 884 to 903, 911 to 920, and 939 to 948; these read WASS…RRSR, ASTQ…SQEI, CQMSSQGQST, and RWASVNTKTG. 2 stretches are compositionally biased toward basic and acidic residues: residues 1046–1060 and 1124–1135; these read RPIK…RDLS and SRGEYSMKDHGH. Serine 1164 is subject to Phosphoserine. Disordered stretches follow at residues 1288–1392, 1700–1767, 1959–1980, 2077–2120, 2320–2356, 2384–2427, 2439–2467, 2622–2656, 2712–2735, 2777–2800, 3002–3067, 3185–3207, 3246–3286, 3645–3703, 3790–3847, and 3863–3913; these read PSGD…SDMS, REAW…EEEN, ECKA…EEKQ, TNAT…ADRL, LATG…LGGS, VSTS…SSLD, FLLQ…LPNS, KPRQ…DPLP, KDSI…SEKI, TGLE…GNVG, RSVE…PGTL, AQTE…REQL, ELNL…TSLK, EGAA…LRPE, SDLA…PQQS, and QPKT…GRTT. The segment covering 1300 to 1321 has biased composition (basic and acidic residues); that stretch reads DIHEIQPHDEKPKHWLSIEEPK. Polar residues-rich tracts occupy residues 1328–1360 and 1722–1741; these read LPQS…SQGL and PKLS…TTTK. Basic and acidic residues-rich tracts occupy residues 1754–1767 and 1970–1980; these read ELGK…EEEN and QSKEEPLEEKQ. Polar residues predominate over residues 2077 to 2091; that stretch reads TNATSNNNTQIQKLT. The span at 2096-2110 shows a compositional bias: basic and acidic residues; it reads RSREYVQTRESESEH. Polar residues-rich tracts occupy residues 2333 to 2351 and 2399 to 2408; these read TRSS…TTHT and TSTGSTTQEA. Residues 2414–2463 are a coiled coil; the sequence is EATVQKERKNSSLDRISRQAEKRVSFLLQEDSNQGEEERQKAEETSEDQQ. Over residues 2417–2427 the composition is skewed to basic and acidic residues; the sequence is VQKERKNSSLD. The segment covering 2634–2647 has biased composition (basic and acidic residues); the sequence is DSSEVIEKRKEASR. Polar residues-rich tracts occupy residues 3039 to 3054 and 3187 to 3199; these read LKNN…SQTM and TEPS…THSQ. Residues 3689–3700 are compositionally biased toward pro residues; it reads PASPDGSPPPSL. The span at 3812–3835 shows a compositional bias: basic and acidic residues; the sequence is DSQRAESLDREGKSPLGKSSERLL. The segment covering 3863-3874 has biased composition (polar residues); that stretch reads QPKTTTGDQSKL. Residues 4185 to 4224 are a coiled coil; sequence SDIELMLQEYRRAREEAKVEIAQARDRLKERTEQEKMRIR. Residues 4344 to 4561 enclose the START domain; it reads PYQDLAKHIV…VAKLASFLRS (218 aa).

This sequence belongs to the TRAFAC class myosin-kinesin ATPase superfamily. Kinesin family. Interacts with ATAD3A.

It is found in the cytoplasm. It localises to the cytoskeleton. The protein resides in the microtubule organizing center. Its subcellular location is the centrosome. The protein localises to the centriole. It is found in the nucleus. Functionally, microtubule-dependent motor protein required for spindle pole assembly during mitosis. Required to stabilize the pericentriolar material (PCM). This Mus musculus (Mouse) protein is StAR-related lipid transfer protein 9 (Stard9).